Here is a 163-residue protein sequence, read N- to C-terminus: Aspartate 1-decarboxylase (163 aa).

S25 acts as the Schiff-base intermediate with substrate; via pyruvic acid in catalysis. Position 25 is a pyruvic acid (Ser) (S25). Residue T57 participates in substrate binding. The active-site Proton donor is the Y58. 73–75 (GAA) is a binding site for substrate.

The protein belongs to the PanD family. Heterooctamer of four alpha and four beta subunits. It depends on pyruvate as a cofactor. Is synthesized initially as an inactive proenzyme, which is activated by self-cleavage at a specific serine bond to produce a beta-subunit with a hydroxyl group at its C-terminus and an alpha-subunit with a pyruvoyl group at its N-terminus.

It localises to the cytoplasm. It carries out the reaction L-aspartate + H(+) = beta-alanine + CO2. The protein operates within cofactor biosynthesis; (R)-pantothenate biosynthesis; beta-alanine from L-aspartate: step 1/1. Catalyzes the pyruvoyl-dependent decarboxylation of aspartate to produce beta-alanine. This chain is Aspartate 1-decarboxylase, found in Saccharopolyspora erythraea (strain ATCC 11635 / DSM 40517 / JCM 4748 / NBRC 13426 / NCIMB 8594 / NRRL 2338).